A 367-amino-acid chain; its full sequence is D-alanine--D-alanine ligase (367 aa).

An ATP-grasp domain is found at 141 to 346 (KNLFAQAGLR…YPELIERLIA (206 aa)). 174–229 (ERELGYPCFVKPANAGSSVGISKCKQRGDLKAAFIEAFQYDRKIIIEEAIVGREIE) contributes to the ATP binding site. The Mg(2+) site is built by aspartate 300, glutamate 313, and asparagine 315.

It belongs to the D-alanine--D-alanine ligase family. Mg(2+) serves as cofactor. Requires Mn(2+) as cofactor.

The protein localises to the cytoplasm. The catalysed reaction is 2 D-alanine + ATP = D-alanyl-D-alanine + ADP + phosphate + H(+). Its pathway is cell wall biogenesis; peptidoglycan biosynthesis. Its function is as follows. Cell wall formation. The sequence is that of D-alanine--D-alanine ligase from Geobacillus kaustophilus (strain HTA426).